The chain runs to 893 residues: cGMP-specific 3',5'-cyclic phosphodiesterase (893 aa).

GAF domains lie at 21-173 (DIDV…GIGI) and 205-390 (NLEC…GLGI). A PDEase domain is found at 420 to 743 (GQDQTEKLIQ…RNWQDLAEKV (324 aa)). His496 acts as the Proton donor in catalysis. 4 residues coordinate a divalent metal cation: His500, His536, Asp537, and Asp647. 2 disordered regions span residues 784–807 (QQSQHGGDDSHTPEHQRSGSRLSI) and 844–893 (HVSE…CALL). Basic and acidic residues-rich tracts occupy residues 789-800 (GGDDSHTPEHQR) and 844-853 (HVSEDMDDKS). The segment covering 864–880 (SVGRMSASSSTSSAGTV) has biased composition (low complexity). The segment covering 883–893 (SKKRSKLCALL) has biased composition (basic residues). A Cysteine methyl ester modification is found at Cys890. Cys890 carries the S-farnesyl cysteine lipid modification. A propeptide spans 891-893 (ALL) (removed in mature form).

It belongs to the cyclic nucleotide phosphodiesterase family. As to quaternary structure, interacts with PrBP. A divalent metal cation is required as a cofactor.

The protein resides in the cell membrane. The enzyme catalyses 3',5'-cyclic GMP + H2O = GMP + H(+). Functionally, has a role regulating cGMP transport in Malpighian tubule principal cells. In Drosophila virilis (Fruit fly), this protein is cGMP-specific 3',5'-cyclic phosphodiesterase.